A 255-amino-acid polypeptide reads, in one-letter code: MSKVKTLILRTPGTNCDIETSYAFELAGSETEMVHINELLAKPSRLAEFQIMAFPGGFGYGDDLGAGRVLANEVRLKLGEKINRFHESGGLIIGICNGFQALVKTGILPGPMKDGQKITLTENNSGRFECRWTYLAVNPFSTCVFTQGIDRLYLPVAHGEGKLLGSPEVINKLNSVVYYTDKDGKRNSPYPANPAGTLMDIAGIADESGRIFALMPHPERFVRGSQHPRWPAEGLKEEGDGLKIFTNAVKWARQV.

The Glutamine amidotransferase type-1 domain maps to 6–255; that stretch reads TLILRTPGTN…TNAVKWARQV (250 aa). Cysteine 96 acts as the Nucleophile in catalysis. Residues histidine 217 and glutamate 219 contribute to the active site.

Part of the FGAM synthase complex composed of 1 PurL, 1 PurQ and 2 PurS subunits.

It localises to the cytoplasm. The enzyme catalyses N(2)-formyl-N(1)-(5-phospho-beta-D-ribosyl)glycinamide + L-glutamine + ATP + H2O = 2-formamido-N(1)-(5-O-phospho-beta-D-ribosyl)acetamidine + L-glutamate + ADP + phosphate + H(+). It carries out the reaction L-glutamine + H2O = L-glutamate + NH4(+). It participates in purine metabolism; IMP biosynthesis via de novo pathway; 5-amino-1-(5-phospho-D-ribosyl)imidazole from N(2)-formyl-N(1)-(5-phospho-D-ribosyl)glycinamide: step 1/2. Its function is as follows. Part of the phosphoribosylformylglycinamidine synthase complex involved in the purines biosynthetic pathway. Catalyzes the ATP-dependent conversion of formylglycinamide ribonucleotide (FGAR) and glutamine to yield formylglycinamidine ribonucleotide (FGAM) and glutamate. The FGAM synthase complex is composed of three subunits. PurQ produces an ammonia molecule by converting glutamine to glutamate. PurL transfers the ammonia molecule to FGAR to form FGAM in an ATP-dependent manner. PurS interacts with PurQ and PurL and is thought to assist in the transfer of the ammonia molecule from PurQ to PurL. The chain is Phosphoribosylformylglycinamidine synthase subunit PurQ from Dehalococcoides mccartyi (strain ATCC BAA-2266 / KCTC 15142 / 195) (Dehalococcoides ethenogenes (strain 195)).